Consider the following 74-residue polypeptide: UPF0435 protein BcerKBAB4_0386 (74 aa).

This sequence belongs to the UPF0435 family.

The chain is UPF0435 protein BcerKBAB4_0386 from Bacillus mycoides (strain KBAB4) (Bacillus weihenstephanensis).